Reading from the N-terminus, the 413-residue chain is Probable N-acetyltransferase HLS1-like (413 aa).

One can recognise an N-acetyltransferase domain in the interval 5–187; sequence VEVREYDPSK…VNPVYAHRVN (183 aa).

Belongs to the acetyltransferase family.

This is Probable N-acetyltransferase HLS1-like from Arabidopsis thaliana (Mouse-ear cress).